The primary structure comprises 100 residues: Urease subunit gamma (100 aa).

This sequence belongs to the urease gamma subunit family. As to quaternary structure, heterotrimer of UreA (gamma), UreB (beta) and UreC (alpha) subunits. Three heterotrimers associate to form the active enzyme.

Its subcellular location is the cytoplasm. It catalyses the reaction urea + 2 H2O + H(+) = hydrogencarbonate + 2 NH4(+). It participates in nitrogen metabolism; urea degradation; CO(2) and NH(3) from urea (urease route): step 1/1. The protein is Urease subunit gamma of Prochlorococcus marinus (strain AS9601).